A 497-amino-acid chain; its full sequence is MSHSKQSGTEAGSIPRVLISADRSSSGKTTISMGLMAALVSRGYKVQPFKVALDYIDPSYHTEITGRFCRNLDGYLMDENGILDVYSHACETGSGADIAIIEGVRGLYEGFEGLSDLGSTAQIAKILKCPVVFVINARSITRSAAALISGYKNFDPDVEIAGVILNNIGGRRHAQKAKEAIEHYTGVPVIGIIPRDPSMQISMRHLGLMPALEGRRRLGDGGFEDRLRGIEEIINKGIDVDRFLEIAGSAKSLTSPENSIFSPAAGAGSPRPRIGIALDEAFNFYYRDNIDLLELAGAEIVYFSPVNDPELPDVDGLYIGGGYPELFAAELEANESMRRSIKEASAAGMPIYAECGGLMYLTEKISTGVPGKGTYHDASMPESTYIMVGALPGHTIMGQTRVVSYNIGTLDRDCLIGKEGNSFKGHEFHHSEIREIPEYAEFAIALLRGTGIKGDRDGLIVGNTLGSYAHLHGVAYRELAGSLVEAAGKFRASRAPR.

The GATase cobBQ-type domain occupies R273–E478. C355 serves as the catalytic Nucleophile.

This sequence belongs to the CobB/CbiA family. Mg(2+) serves as cofactor.

It carries out the reaction cob(II)yrinate + 2 L-glutamine + 2 ATP + 2 H2O = cob(II)yrinate a,c diamide + 2 L-glutamate + 2 ADP + 2 phosphate + 2 H(+). It catalyses the reaction Ni-sirohydrochlorin + 2 L-glutamine + 2 ATP + 2 H2O = Ni-sirohydrochlorin a,c-diamide + 2 L-glutamate + 2 ADP + 2 phosphate + 2 H(+). The protein operates within cofactor biosynthesis; adenosylcobalamin biosynthesis; cob(II)yrinate a,c-diamide from sirohydrochlorin (anaerobic route): step 10/10. In terms of biological role, catalyzes the ATP-dependent amidation of the two carboxylate groups at positions a and c of cobyrinate, using either L-glutamine or ammonia as the nitrogen source (Potential). Involved in the biosynthesis of the unique nickel-containing tetrapyrrole coenzyme F430, the prosthetic group of methyl-coenzyme M reductase (MCR), which plays a key role in methanogenesis and anaerobic methane oxidation. Catalyzes the ATP-dependent amidation of the two carboxylate groups at positions a and c of Ni-sirohydrochlorin, using L-glutamine or ammonia as the nitrogen source. The sequence is that of Cobyrinate a,c-diamide synthase from Methanosarcina acetivorans (strain ATCC 35395 / DSM 2834 / JCM 12185 / C2A).